Here is a 256-residue protein sequence, read N- to C-terminus: Homeobox protein ceh-34 (256 aa).

The segment at residues 134–193 (GEETNYCFKSKSRNVLRDAYKKCQYPSVEDKRRLAQQTELSIIQVSNWFKNKRQRERAAG) is a DNA-binding region (homeobox). The disordered stretch occupies residues 187–233 (QRERAAGQLDRSSARSNDSDDGSSGCESKPPMNIDSPAPPPLPTSFD).

This sequence belongs to the SIX/Sine oculis homeobox family. Interacts (via N-terminus) with eya-1 (via C-terminus). In terms of tissue distribution, shows expression only in the pharyngeal nervous system.

It is found in the nucleus. In terms of biological role, acts as a transcription regulator. Binds to the sequence motif 5'-TCAGGTT-3'. Binds to the cis-regulatory element of proapoptotic factor egl-1 gene and together with eya-1 activates egl-1 expression to promote motor neuron M4 sister cell apoptosis. Also promotes apoptosis of I1 pharyngeal neuron sister cell. Together with eya-1, required to specify the coelomocyte fate in embryonic and postembryonic precursors. Required to establish and maintain the differentiation of all 14 classes of pharyngeal neurons. Controls the neurotransmitter signaling capacity of the neurons and is required for the expression of some neurotransmitter receptors including mgl-1, glr-2 and ser-7. Affects the neuropeptidergic identity of pharyngeal neurons. Required for the pharyngeal expression of sensory receptors gur-3, glu-7 and str-97, antimicrobial defense genes such as spp-12, gpla-1/flr-2 and htrl-1, and pan-pharyngeal nervous system genes such as kin-36. Required to establish and maintain pharyngeal nervous system architecture by ensuring correct axon and synapse organization. Required for expression of eya-1 which may act as a transcriptional cofactor to specify distinct pharyngeal neuron types. Cooperates with several homeobox proteins to specify distinct pharyngeal neuron types including unc-86 in the NSM and I1 neurons, ceh-14 in the I2 neuron, ceh-2 and pros-1 in the I3 neuron, ceh-45 in the M1 neuron, ceh-2 in the M3 neuron, ceh-28 and zag-1 in the M4 neuron, and vab-15 in the M5 neuron. The chain is Homeobox protein ceh-34 (ceh-34) from Caenorhabditis elegans.